The primary structure comprises 425 residues: Enolase (425 aa).

A (2R)-2-phosphoglycerate-binding site is contributed by glutamine 162. Glutamate 204 serves as the catalytic Proton donor. The Mg(2+) site is built by aspartate 241, glutamate 282, and aspartate 309. (2R)-2-phosphoglycerate contacts are provided by lysine 334, arginine 363, serine 364, and lysine 385. Lysine 334 functions as the Proton acceptor in the catalytic mechanism.

Belongs to the enolase family. Mg(2+) serves as cofactor.

The protein resides in the cytoplasm. It is found in the secreted. It localises to the cell surface. The enzyme catalyses (2R)-2-phosphoglycerate = phosphoenolpyruvate + H2O. The protein operates within carbohydrate degradation; glycolysis; pyruvate from D-glyceraldehyde 3-phosphate: step 4/5. In terms of biological role, catalyzes the reversible conversion of 2-phosphoglycerate (2-PG) into phosphoenolpyruvate (PEP). It is essential for the degradation of carbohydrates via glycolysis. In Corynebacterium glutamicum (strain R), this protein is Enolase.